Reading from the N-terminus, the 541-residue chain is MNKPFLILLIALIAFSGCNMRKYFKPAKHQIKGEAYFPNHLQESIVSSNRYGAILKNGAVIGDKGLTQLRIGKNFNYESSFLNESQGFFILAQDCLNKIDKKTSKSRAAKTEETELKLKGVEAEVQDKVCHQVELISNNPNASQQSIVIPLETFALSASVKGNLLAVVLADNSANLYDITSQKLLFSEKGSPSTTINSLMAMPIFMDTVVVFPMLDGRLLVVDYVHGNPTPIRNIVISSDKFFNNITYLIVDGNNMIASTGKRILSVVSGQEFNYDGDIVDLLYDKGTLYVLTLDGQILQMDKSLRELNSVKLPFASLNTIVLNNNKLYSLEKRGYVIEVDLNDFDSYNVYKTPTIGSFKFFSSNRLDKGVFYDKNRVYYDRYYLDYNDFKPKLYPHAAEFKTSQKGEKGNAPIYLQERHKAKENKQPLEENKVKPRNSGFEEEEVKTRRPEPTKDQNNAIQQGETKNNESKNTPISKENAAKKEAPKPSSKEEKRRLKEEKKKAKAEQRAREFEQRAREHQERDEKELEERRKALEMNKK.

Composition is skewed to basic and acidic residues over residues 420 to 434 (HKAKENKQPLEENKV) and 446 to 455 (VKTRRPEPTK). Positions 420 to 541 (HKAKENKQPL…RRKALEMNKK (122 aa)) are disordered. The segment covering 456 to 476 (DQNNAIQQGETKNNESKNTPI) has biased composition (polar residues). A compositionally biased stretch (basic and acidic residues) spans 480 to 541 (NAAKKEAPKP…RRKALEMNKK (62 aa)).

The protein resides in the cell surface. Its function is as follows. Binds plasminogen, specifically, and in a concentration and lysine-dependent manner. Plasminogen is the precursor of plasmin, a serine protease that cleaves fibrin, fibronectin, laminin and vitronectin. Acquisition of plasminogen/plasmin could enable H.pylori to degrade host components. The protein is Plasminogen-binding protein PgbB (pgbB) of Helicobacter pylori (strain J99 / ATCC 700824) (Campylobacter pylori J99).